Consider the following 248-residue polypeptide: Adenosylcobinamide-GDP ribazoletransferase (248 aa).

6 helical membrane-spanning segments follow: residues 36 to 56, 59 to 79, 114 to 134, 137 to 157, 170 to 190, and 199 to 219; these read FFLP…YLAL, FLPP…ITGG, GTIA…SLVL, YSIA…FLCL, IFIG…VLAL, and ATII…LLCL.

Belongs to the CobS family. The cofactor is Mg(2+).

It localises to the cell membrane. It carries out the reaction alpha-ribazole + adenosylcob(III)inamide-GDP = adenosylcob(III)alamin + GMP + H(+). The enzyme catalyses alpha-ribazole 5'-phosphate + adenosylcob(III)inamide-GDP = adenosylcob(III)alamin 5'-phosphate + GMP + H(+). It functions in the pathway cofactor biosynthesis; adenosylcobalamin biosynthesis; adenosylcobalamin from cob(II)yrinate a,c-diamide: step 7/7. Its function is as follows. Joins adenosylcobinamide-GDP and alpha-ribazole to generate adenosylcobalamin (Ado-cobalamin). Also synthesizes adenosylcobalamin 5'-phosphate from adenosylcobinamide-GDP and alpha-ribazole 5'-phosphate. This is Adenosylcobinamide-GDP ribazoletransferase from Clostridium botulinum (strain Okra / Type B1).